The primary structure comprises 387 residues: Polyphosphate kinase (387 aa).

Mg(2+) contacts are provided by Arg-347 and Arg-377.

The protein belongs to the polyphosphate kinase 1 (PPK1) family. Mg(2+) serves as cofactor. An intermediate of this reaction is the autophosphorylated ppk in which a phosphate is covalently linked to a histidine residue through a N-P bond.

The catalysed reaction is [phosphate](n) + ATP = [phosphate](n+1) + ADP. Functionally, catalyzes the reversible transfer of the terminal phosphate of ATP to form a long-chain polyphosphate (polyP). This is Polyphosphate kinase (ppk) from Aphanizomenon baltica.